We begin with the raw amino-acid sequence, 411 residues long: Putative nickel insertion protein (411 aa).

Belongs to the LarC family.

The protein is Putative nickel insertion protein of Methanothermobacter thermautotrophicus (strain ATCC 29096 / DSM 1053 / JCM 10044 / NBRC 100330 / Delta H) (Methanobacterium thermoautotrophicum).